The following is a 179-amino-acid chain: Small ribosomal subunit protein uS5c (179 aa).

One can recognise an S5 DRBM domain in the interval 26 to 89 (FVERLIKISR…TDGRKNLIDV (64 aa)).

The protein belongs to the universal ribosomal protein uS5 family. As to quaternary structure, part of the 30S ribosomal subunit. Contacts protein S4.

The protein resides in the plastid. It is found in the chloroplast. In terms of biological role, with S4 and S12 plays an important role in translational accuracy. The chain is Small ribosomal subunit protein uS5c (rps5) from Thalassiosira pseudonana (Marine diatom).